The primary structure comprises 240 residues: UDP-2,3-diacylglucosamine hydrolase (240 aa).

Residues aspartate 9, histidine 11, aspartate 43, asparagine 81, and histidine 116 each contribute to the Mn(2+) site. Residue 81–82 (NR) coordinates substrate. Aspartate 124, serine 162, lysine 166, lysine 169, and histidine 197 together coordinate substrate. 2 residues coordinate Mn(2+): histidine 197 and histidine 199.

It belongs to the LpxH family. Requires Mn(2+) as cofactor.

The protein resides in the cell inner membrane. The enzyme catalyses UDP-2-N,3-O-bis[(3R)-3-hydroxytetradecanoyl]-alpha-D-glucosamine + H2O = 2-N,3-O-bis[(3R)-3-hydroxytetradecanoyl]-alpha-D-glucosaminyl 1-phosphate + UMP + 2 H(+). Its pathway is glycolipid biosynthesis; lipid IV(A) biosynthesis; lipid IV(A) from (3R)-3-hydroxytetradecanoyl-[acyl-carrier-protein] and UDP-N-acetyl-alpha-D-glucosamine: step 4/6. In terms of biological role, hydrolyzes the pyrophosphate bond of UDP-2,3-diacylglucosamine to yield 2,3-diacylglucosamine 1-phosphate (lipid X) and UMP by catalyzing the attack of water at the alpha-P atom. Involved in the biosynthesis of lipid A, a phosphorylated glycolipid that anchors the lipopolysaccharide to the outer membrane of the cell. In Neisseria meningitidis serogroup B (strain ATCC BAA-335 / MC58), this protein is UDP-2,3-diacylglucosamine hydrolase.